The sequence spans 229 residues: Protein FAM3C (229 aa).

An N-terminal signal peptide occupies residues 1 to 24; sequence MRIAGAIKFVVAVALFLLTFYVIS. Cystine bridges form between cysteine 59/cysteine 87 and cysteine 65/cysteine 222. One can recognise a GG-type lectin domain in the interval 68–226; that stretch reads KHFAFKIASG…VEMEGCIPQK (159 aa).

This sequence belongs to the FAM3 family. As to expression, expressed in the retinal ganglion cell layer.

The protein resides in the secreted. Its function is as follows. Involved in retinal laminar formation. This chain is Protein FAM3C (fam3c), found in Xenopus laevis (African clawed frog).